Reading from the N-terminus, the 1164-residue chain is Phospholipid-transporting ATPase IA (1164 aa).

Residues 1–65 are Cytoplasmic-facing; sequence MPTMRRTVSE…TAKYNIITFL (65 aa). Position 25 is a phosphoserine (serine 25). Threonine 28 carries the phosphothreonine modification. Serine 29 is modified (phosphoserine). A helical transmembrane segment spans residues 66 to 86; the sequence is PRFLYSQFRRAANSFFLFIAL. Topologically, residues 87–92 are exoplasmic loop; that stretch reads LQQIPD. The helical transmembrane segment at 93-115 threads the bilayer; it reads VSPTGRYTTLVPLLFILAVAAIK. Residues 116–297 are Cytoplasmic-facing; it reads EIIEDIKRHK…SNVERITNVQ (182 aa). Residues 298–319 form a helical membrane-spanning segment; it reads ILILFCILIAMSLVCSVGSAIW. Residues 320 to 344 are Exoplasmic loop-facing; the sequence is NRRHSGKDWYLNLNYGGASNFGLNF. The helical transmembrane segment at 345 to 366 threads the bilayer; it reads LTFIILFNNLIPISLLVTLEVV. Over 367 to 857 the chain is Cytoplasmic; it reads KFTQAYFINW…GAWNYNRVSK (491 aa). Catalysis depends on aspartate 409, which acts as the 4-aspartylphosphate intermediate. 3 residues coordinate ATP: aspartate 409, lysine 410, and threonine 411. Aspartate 409 provides a ligand contact to Mg(2+). Threonine 411 contacts Mg(2+). A Phosphoserine modification is found at serine 443. ATP is bound by residues glutamate 508, phenylalanine 549, lysine 572, arginine 605, threonine 685, glycine 686, aspartate 687, 741 to 748, arginine 775, and lysine 781; that span reads ALIIDGKT. Aspartate 801 contributes to the Mg(2+) binding site. Asparagine 804 and aspartate 805 together coordinate ATP. A Mg(2+)-binding site is contributed by aspartate 805. The chain crosses the membrane as a helical span at residues 858–878; it reads CILYCFYKNIVLYIIEIWFAF. Residues 879–890 are Exoplasmic loop-facing; sequence VNGFSGQILFER. The helical transmembrane segment at 891–910 threads the bilayer; that stretch reads WCIGLYNVMFTAMPPLTLGI. Residues 911–940 lie on the Cytoplasmic side of the membrane; that stretch reads FERSCRKENMLKYPELYKTSQNALDFNTKV. Residues 941 to 962 traverse the membrane as a helical segment; the sequence is FWVHCLNGLFHSVILFWFPLKA. At 963-976 the chain is on the exoplasmic loop side; sequence LQYGTAFGNGKTSD. The helical transmembrane segment at 977–999 threads the bilayer; the sequence is YLLLGNFVYTFVVITVCLKAGLE. Topologically, residues 1000-1005 are cytoplasmic; the sequence is TSYWTW. Residues 1006 to 1026 form a helical membrane-spanning segment; it reads FSHIAIWGSIALWVVFFGIYS. Over 1027 to 1044 the chain is Exoplasmic loop; that stretch reads SLWPAIPMAPDMSGEAAM. Residues 1045–1070 form a helical membrane-spanning segment; the sequence is LFSSGVFWMGLLFIPVASLLLDVVYK. At 1071–1164 the chain is on the cytoplasmic side; it reads VIKRTAFKTL…DTTKQRPDEW (94 aa). 1095–1102 lines the ATP pocket; sequence GAVVLGKS. Serine 1126 is modified (phosphoserine).

It belongs to the cation transport ATPase (P-type) (TC 3.A.3) family. Type IV subfamily. Component of a P4-ATPase flippase complex which consists of a catalytic alpha subunit and an accessory beta subunit. Interacts with TMEM30A to form a flippase complex; this complex forms an intermediate phosphoenzyme. Interacts with TMEM30B; this interaction is reported conflictingly. Mg(2+) serves as cofactor. Cleaved by calpain in a caspase- and calcium influx-dependent manner during platelet apoptosis leading to a 100 kDa polypeptide. Found in most adult tissues except liver, testis and placenta. Most abundant in heart, brain and skeletal muscle. Also detected in fetal tissues. Isoform 1 is only detected in brain, skeletal muscle and heart and is the most abundant form in skeletal muscle. Highly expressed in platelets.

It localises to the cytoplasmic vesicle. The protein resides in the secretory vesicle. It is found in the chromaffin granule membrane. The protein localises to the cytoplasmic granule. Its subcellular location is the cell membrane. It localises to the endoplasmic reticulum. The protein resides in the golgi apparatus. The enzyme catalyses ATP + H2O + phospholipidSide 1 = ADP + phosphate + phospholipidSide 2.. The catalysed reaction is a 1,2-diacyl-sn-glycero-3-phospho-L-serine(out) + ATP + H2O = a 1,2-diacyl-sn-glycero-3-phospho-L-serine(in) + ADP + phosphate + H(+). ATPase activity is stimulated by phosphatidylserine (PS) and minimally by phosphatidylethanolamine (PE). ATPase activity is inhibited by beryllium fluoride and aluminum trifluoride. In terms of biological role, catalytic component of a P4-ATPase flippase complex which catalyzes the hydrolysis of ATP coupled to the transport of aminophospholipids from the outer to the inner leaflet of various membranes and ensures the maintenance of asymmetric distribution of phospholipids. Phospholipid translocation also seems to be implicated in vesicle formation and in uptake of lipid signaling molecules. In vitro, its ATPase activity is selectively and stereospecifically stimulated by phosphatidylserine (PS). The flippase complex ATP8A1:TMEM30A seems to play a role in regulation of cell migration probably involving flippase-mediated translocation of phosphatidylethanolamine (PE) at the cell membrane. Acts as aminophospholipid translocase at the cell membrane in neuronal cells. The polypeptide is Phospholipid-transporting ATPase IA (Homo sapiens (Human)).